The following is a 147-amino-acid chain: 3-dehydroquinate dehydratase (147 aa).

Residue tyrosine 23 is the Proton acceptor of the active site. Positions 74, 80, and 87 each coordinate substrate. Catalysis depends on histidine 100, which acts as the Proton donor. Residues 101–102 (LS) and arginine 111 contribute to the substrate site.

It belongs to the type-II 3-dehydroquinase family. As to quaternary structure, homododecamer.

It catalyses the reaction 3-dehydroquinate = 3-dehydroshikimate + H2O. It participates in metabolic intermediate biosynthesis; chorismate biosynthesis; chorismate from D-erythrose 4-phosphate and phosphoenolpyruvate: step 3/7. In terms of biological role, catalyzes a trans-dehydration via an enolate intermediate. The sequence is that of 3-dehydroquinate dehydratase from Clostridium botulinum (strain Loch Maree / Type A3).